We begin with the raw amino-acid sequence, 220 residues long: Large ribosomal subunit protein bL25 (220 aa).

Acidic residues predominate over residues 186–199; that stretch reads ELEDEDEDEDEVAA. Residues 186-220 are disordered; sequence ELEDEDEDEDEVAADEVPATEVDDQAAVKEGEGKE. The span at 211–220 shows a compositional bias: basic and acidic residues; sequence AAVKEGEGKE.

The protein belongs to the bacterial ribosomal protein bL25 family. CTC subfamily. Part of the 50S ribosomal subunit; part of the 5S rRNA/L5/L18/L25 subcomplex. Contacts the 5S rRNA. Binds to the 5S rRNA independently of L5 and L18.

This is one of the proteins that binds to the 5S RNA in the ribosome where it forms part of the central protuberance. This Christiangramia forsetii (strain DSM 17595 / CGMCC 1.15422 / KT0803) (Gramella forsetii) protein is Large ribosomal subunit protein bL25.